A 277-amino-acid chain; its full sequence is Hydroxyethylthiazole kinase (277 aa).

Methionine 56 serves as a coordination point for substrate. 2 residues coordinate ATP: arginine 131 and threonine 177. Residue alanine 204 coordinates substrate.

The protein belongs to the Thz kinase family. Requires Mg(2+) as cofactor.

It carries out the reaction 5-(2-hydroxyethyl)-4-methylthiazole + ATP = 4-methyl-5-(2-phosphooxyethyl)-thiazole + ADP + H(+). The protein operates within cofactor biosynthesis; thiamine diphosphate biosynthesis; 4-methyl-5-(2-phosphoethyl)-thiazole from 5-(2-hydroxyethyl)-4-methylthiazole: step 1/1. In terms of biological role, catalyzes the phosphorylation of the hydroxyl group of 4-methyl-5-beta-hydroxyethylthiazole (THZ). In Gemmatimonas aurantiaca (strain DSM 14586 / JCM 11422 / NBRC 100505 / T-27), this protein is Hydroxyethylthiazole kinase.